A 248-amino-acid polypeptide reads, in one-letter code: Small ribosomal subunit protein uS3 (248 aa).

In terms of domain architecture, KH type-2 spans Val38–Lys106. A compositionally biased stretch (basic and acidic residues) spans Glu213 to Gly230. Residues Glu213 to Gly248 form a disordered region.

The protein belongs to the universal ribosomal protein uS3 family. As to quaternary structure, part of the 30S ribosomal subunit. Forms a tight complex with proteins S10 and S14.

Its function is as follows. Binds the lower part of the 30S subunit head. Binds mRNA in the 70S ribosome, positioning it for translation. The sequence is that of Small ribosomal subunit protein uS3 from Corynebacterium diphtheriae (strain ATCC 700971 / NCTC 13129 / Biotype gravis).